Reading from the N-terminus, the 212-residue chain is Probable nicotinate-nucleotide adenylyltransferase (212 aa).

It belongs to the NadD family.

The catalysed reaction is nicotinate beta-D-ribonucleotide + ATP + H(+) = deamido-NAD(+) + diphosphate. It functions in the pathway cofactor biosynthesis; NAD(+) biosynthesis; deamido-NAD(+) from nicotinate D-ribonucleotide: step 1/1. Its function is as follows. Catalyzes the reversible adenylation of nicotinate mononucleotide (NaMN) to nicotinic acid adenine dinucleotide (NaAD). The polypeptide is Probable nicotinate-nucleotide adenylyltransferase (Shewanella sp. (strain MR-4)).